The sequence spans 113 residues: Small ribosomal subunit protein bS6 (113 aa).

The protein belongs to the bacterial ribosomal protein bS6 family.

Binds together with bS18 to 16S ribosomal RNA. This chain is Small ribosomal subunit protein bS6, found in Flavobacterium johnsoniae (strain ATCC 17061 / DSM 2064 / JCM 8514 / BCRC 14874 / CCUG 350202 / NBRC 14942 / NCIMB 11054 / UW101) (Cytophaga johnsonae).